A 393-amino-acid polypeptide reads, in one-letter code: 2-methylcitrate synthase (393 aa).

Arg-92 and His-207 together coordinate substrate. The active site involves His-242. 275–279 contributes to the CoA binding site; it reads KIMGF. His-281 is an active-site residue. Residue Arg-290 participates in substrate binding. The active site involves Asp-332. 2 residues coordinate substrate: Arg-357 and Arg-376.

The protein belongs to the citrate synthase family. As to quaternary structure, homodimer.

It catalyses the reaction propanoyl-CoA + oxaloacetate + H2O = (2S,3S)-2-methylcitrate + CoA + H(+). The enzyme catalyses oxaloacetate + acetyl-CoA + H2O = citrate + CoA + H(+). Its pathway is organic acid metabolism; propanoate degradation. It functions in the pathway carbohydrate metabolism; tricarboxylic acid cycle; isocitrate from oxaloacetate: step 1/2. Involved in the catabolism of short chain fatty acids (SCFA) via the tricarboxylic acid (TCA)(acetyl degradation route) and via the 2-methylcitrate cycle I (propionate degradation route). Catalyzes the Claisen condensation of propionyl-CoA and oxaloacetate (OAA) to yield 2-methylcitrate (2-MC) and CoA. Also catalyzes the condensation of oxaloacetate with acetyl-CoA. This Mycobacterium tuberculosis (strain ATCC 35801 / TMC 107 / Erdman) protein is 2-methylcitrate synthase (gltA1).